The sequence spans 1033 residues: Translation initiation factor IF-2 (1033 aa).

The disordered stretch occupies residues 49-432 (AFQQGGGNGR…APSVGGVMLP (384 aa)). Residues 59–113 (SAGRPAAPKKAAPRPSAPSPAQAGPSQAAPAAGDRAAAPRPSAAPKAPAAQQPAA) are compositionally biased toward low complexity. 2 stretches are compositionally biased toward pro residues: residues 114 to 140 (PSAPAPAPSQGPRPTPGPKPAPRPAPA) and 148 to 164 (PAAPAAPSTPAPAPSGP). Positions 171–189 (PGAPKPGGARPSGPGQDRG) are enriched in low complexity. Residues 190 to 201 (QQGGQGRPGGQR) are compositionally biased toward gly residues. Positions 236-246 (APRPQGGPRPG) are enriched in pro residues. Positions 247–268 (GPGGAPGGGPRPQGPGGQGGGP) are enriched in gly residues. Residues 305–314 (MMPQRPAAGP) are compositionally biased toward low complexity. Residues 318–401 (PGGGGRGPGG…GTQGAFGRPG (84 aa)) are compositionally biased toward gly residues. Basic residues predominate over residues 405–414 (RRGRKSKRQR). Residues 526–698 (VRPPVVTVMG…VVLTADASLD (173 aa)) enclose the tr-type G domain. The G1 stretch occupies residues 535-542 (GHVDHGKT). 535-542 (GHVDHGKT) serves as a coordination point for GTP. Positions 560–564 (GITQH) are G2. Residues 585–588 (DTPG) form a G3 region. GTP contacts are provided by residues 585–589 (DTPGH) and 639–642 (NKID). Positions 639-642 (NKID) are G4. The interval 675 to 677 (SAK) is G5.

It belongs to the TRAFAC class translation factor GTPase superfamily. Classic translation factor GTPase family. IF-2 subfamily.

It localises to the cytoplasm. In terms of biological role, one of the essential components for the initiation of protein synthesis. Protects formylmethionyl-tRNA from spontaneous hydrolysis and promotes its binding to the 30S ribosomal subunits. Also involved in the hydrolysis of GTP during the formation of the 70S ribosomal complex. The polypeptide is Translation initiation factor IF-2 (Streptomyces coelicolor (strain ATCC BAA-471 / A3(2) / M145)).